The chain runs to 178 residues: Large ribosomal subunit protein uL6 (178 aa).

The protein belongs to the universal ribosomal protein uL6 family. Part of the 50S ribosomal subunit.

This protein binds to the 23S rRNA, and is important in its secondary structure. It is located near the subunit interface in the base of the L7/L12 stalk, and near the tRNA binding site of the peptidyltransferase center. The protein is Large ribosomal subunit protein uL6 of Geobacillus kaustophilus (strain HTA426).